The following is a 309-amino-acid chain: UDP-N-acetylenolpyruvoylglucosamine reductase (309 aa).

One can recognise an FAD-binding PCMH-type domain in the interval arginine 34–alanine 199. Arginine 179 is an active-site residue. Serine 228 serves as the catalytic Proton donor. Residue glutamate 298 is part of the active site.

It belongs to the MurB family. Requires FAD as cofactor.

Its subcellular location is the cytoplasm. The catalysed reaction is UDP-N-acetyl-alpha-D-muramate + NADP(+) = UDP-N-acetyl-3-O-(1-carboxyvinyl)-alpha-D-glucosamine + NADPH + H(+). The protein operates within cell wall biogenesis; peptidoglycan biosynthesis. Its function is as follows. Cell wall formation. This is UDP-N-acetylenolpyruvoylglucosamine reductase from Rhodopseudomonas palustris (strain ATCC BAA-98 / CGA009).